We begin with the raw amino-acid sequence, 379 residues long: RIB43A-like with coiled-coils protein 1 (379 aa).

Coiled-coil stretches lie at residues E43 to L111 and I285 to R337.

The protein belongs to the RIB43A family. In terms of assembly, microtubule inner protein component of sperm flagellar doublet microtubules.

Its subcellular location is the cytoplasm. The protein resides in the cytoskeleton. It is found in the flagellum axoneme. The polypeptide is RIB43A-like with coiled-coils protein 1 (RIBC1) (Bos taurus (Bovine)).